We begin with the raw amino-acid sequence, 113 residues long: UPF0339 protein MS1092 (113 aa).

A run of 2 repeats spans residues 11 to 59 (AKDG…NFEF) and 62 to 110 (NKNG…IKDI).

It belongs to the UPF0339 family. Duplicated subfamily.

This Mannheimia succiniciproducens (strain KCTC 0769BP / MBEL55E) protein is UPF0339 protein MS1092.